The sequence spans 553 residues: MGANQFDVVVVGSGAAGLYACLCLPGHYRVALVTKAELKTGASDWAQGGIAAAIAPTDSPQSHYEDTLAAGAGLCDGEAVDFLVNHAPQAIAELVQFGVSFDRHGQHLALTLEAAHSQPRVLHAADTTGRAIVSTLMGQVQARPNVEIFSQAIALSLNIEPTTGHCRGIQVFVNQTIETFHSRAVLLATGGGGQVFAQTTNPKVSTGDGIALAWRSGAQVRDLEFFQFHPTALTKPGVPHFLISEAVRGEGAHLLDRQGKRFAFDYHPRGELAPRDVVSRAIFQHLANTEKDPTQATVFLDLSPIEPERIQRRFPNIIRRCLHWGVDIFREPIPVAPAAHYWMGGITTDINCQTTIPGLYALGETASTGVHGANRLASNSLLECIVFASQLRNLSLPPLASSDSNVNQSIKEIRLDTTNDLALLNHWRSELPRLMWQTAGICRQAETLQMAIAKLEQWQEQWQQLSSSKLLAHLPEDQKISLSGPGLNEFMQLWAETHNLLDIAQLILTSALFREESRGGHYRLDCPDTKREWQSHTVIEGTRVFLQPSQSQD.

FAD contacts are provided by residues 13-16 (SGAA), K35, 42-49 (ASDWAQGG), and D208. R275 functions as the Proton donor/acceptor in the catalytic mechanism. FAD contacts are provided by residues E364 and 380 to 381 (SL).

Belongs to the FAD-dependent oxidoreductase 2 family. NadB subfamily. FAD serves as cofactor.

The protein localises to the cytoplasm. The catalysed reaction is L-aspartate + O2 = iminosuccinate + H2O2. Its pathway is cofactor biosynthesis; NAD(+) biosynthesis; iminoaspartate from L-aspartate (oxidase route): step 1/1. In terms of biological role, catalyzes the oxidation of L-aspartate to iminoaspartate, the first step in the de novo biosynthesis of NAD(+). This Synechocystis sp. (strain ATCC 27184 / PCC 6803 / Kazusa) protein is L-aspartate oxidase (nadB).